The chain runs to 372 residues: Queuine tRNA-ribosyltransferase (372 aa).

The active-site Proton acceptor is the Asp89. Substrate contacts are provided by residues 89-93 (DSGGF), Asp161, and Gly232. Residues 262–268 (GIGDLPS) form an RNA binding region. Asp281 functions as the Nucleophile in the catalytic mechanism. The RNA binding; important for wobble base 34 recognition stretch occupies residues 286–290 (TKAAR). Zn(2+)-binding residues include Cys319, Cys321, Cys324, and His351.

Belongs to the queuine tRNA-ribosyltransferase family. In terms of assembly, homodimer. Within each dimer, one monomer is responsible for RNA recognition and catalysis, while the other monomer binds to the replacement base PreQ1. Requires Zn(2+) as cofactor.

It carries out the reaction 7-aminomethyl-7-carbaguanine + guanosine(34) in tRNA = 7-aminomethyl-7-carbaguanosine(34) in tRNA + guanine. It participates in tRNA modification; tRNA-queuosine biosynthesis. Catalyzes the base-exchange of a guanine (G) residue with the queuine precursor 7-aminomethyl-7-deazaguanine (PreQ1) at position 34 (anticodon wobble position) in tRNAs with GU(N) anticodons (tRNA-Asp, -Asn, -His and -Tyr). Catalysis occurs through a double-displacement mechanism. The nucleophile active site attacks the C1' of nucleotide 34 to detach the guanine base from the RNA, forming a covalent enzyme-RNA intermediate. The proton acceptor active site deprotonates the incoming PreQ1, allowing a nucleophilic attack on the C1' of the ribose to form the product. After dissociation, two additional enzymatic reactions on the tRNA convert PreQ1 to queuine (Q), resulting in the hypermodified nucleoside queuosine (7-(((4,5-cis-dihydroxy-2-cyclopenten-1-yl)amino)methyl)-7-deazaguanosine). This is Queuine tRNA-ribosyltransferase from Chlamydia trachomatis serovar A (strain ATCC VR-571B / DSM 19440 / HAR-13).